The primary structure comprises 37 residues: Large ribosomal subunit protein bL36 (37 aa).

The protein belongs to the bacterial ribosomal protein bL36 family.

This Thermobifida fusca (strain YX) protein is Large ribosomal subunit protein bL36.